Reading from the N-terminus, the 83-residue chain is RNA-binding protein Hfq (83 aa).

Positions 10-70 constitute a Sm domain; that stretch reads DAFLNQVRKE…ISTVSPLKPV (61 aa).

It belongs to the Hfq family. In terms of assembly, homohexamer.

Functionally, RNA chaperone that binds small regulatory RNA (sRNAs) and mRNAs to facilitate mRNA translational regulation in response to envelope stress, environmental stress and changes in metabolite concentrations. Also binds with high specificity to tRNAs. The polypeptide is RNA-binding protein Hfq (Pelotomaculum thermopropionicum (strain DSM 13744 / JCM 10971 / SI)).